The sequence spans 468 residues: Adenylyltransferase and sulfurtransferase MOCS3-1 (468 aa).

Residues Gly111, Asp132, 139–143 (NNLHR), Lys156, and 200–201 (DN) each bind ATP. Residues Cys241 and Cys244 each contribute to the Zn(2+) site. The active-site Glycyl thioester intermediate; for adenylyltransferase activity is the Cys258. The Zn(2+) site is built by Cys316 and Cys319. Residues 371 to 466 (DGEPHLLLDV…WGRDVDPDFP (96 aa)) form the Rhodanese domain. Cys426 functions as the Cysteine persulfide intermediate; for sulfurtransferase activity in the catalytic mechanism.

It in the N-terminal section; belongs to the HesA/MoeB/ThiF family. UBA4 subfamily. Requires Zn(2+) as cofactor.

It localises to the cytoplasm. It carries out the reaction [molybdopterin-synthase sulfur-carrier protein]-C-terminal Gly-Gly + ATP + H(+) = [molybdopterin-synthase sulfur-carrier protein]-C-terminal Gly-Gly-AMP + diphosphate. The enzyme catalyses [molybdopterin-synthase sulfur-carrier protein]-C-terminal Gly-Gly-AMP + S-sulfanyl-L-cysteinyl-[cysteine desulfurase] + AH2 = [molybdopterin-synthase sulfur-carrier protein]-C-terminal-Gly-aminoethanethioate + L-cysteinyl-[cysteine desulfurase] + A + AMP + 2 H(+). It functions in the pathway tRNA modification; 5-methoxycarbonylmethyl-2-thiouridine-tRNA biosynthesis. The protein operates within cofactor biosynthesis; molybdopterin biosynthesis. Its function is as follows. Plays a central role in 2-thiolation of mcm(5)S(2)U at tRNA wobble positions of cytosolic tRNA(Lys), tRNA(Glu) and tRNA(Gln). Also essential during biosynthesis of the molybdenum cofactor. Acts by mediating the C-terminal thiocarboxylation of sulfur carriers URM1 and MOCS2A. Its N-terminus first activates URM1 and MOCS2A as acyl-adenylates (-COAMP), then the persulfide sulfur on the catalytic cysteine is transferred to URM1 and MOCS2A to form thiocarboxylation (-COSH) of their C-terminus. The reaction probably involves hydrogen sulfide that is generated from the persulfide intermediate and that acts as a nucleophile towards URM1 and MOCS2A. Subsequently, a transient disulfide bond is formed. Does not use thiosulfate as sulfur donor; NFS1 probably acting as a sulfur donor for thiocarboxylation reactions. In Zea mays (Maize), this protein is Adenylyltransferase and sulfurtransferase MOCS3-1.